The sequence spans 191 residues: Small ribosomal subunit protein uS4A (191 aa).

A phosphoserine mark is found at S50 and S161. Residues 107 to 181 form the S4 RNA-binding domain; that stretch reads RRLQTQVFKL…CKRKRLRSQE (75 aa). Y164 bears the Phosphotyrosine mark. Residues 166 to 191 are disordered; it reads GGRPGRCKRKRLRSQEGGEGEEAEEE. Residue S179 is modified to Phosphoserine.

It belongs to the universal ribosomal protein uS4 family. Component of the small ribosomal subunit (SSU). Mature yeast ribosomes consist of a small (40S) and a large (60S) subunit. The 40S small subunit contains 1 molecule of ribosomal RNA (18S rRNA) and at least 33 different proteins. The large 60S subunit contains 3 rRNA molecules (25S, 5.8S and 5S rRNA) and at least 46 different proteins. Interacts with snoRNA U3. uS11 interacts with MPP10. Component of the ribosomal small subunit (SSU) processome composed of at least 40 protein subunits and snoRNA U3.

It localises to the cytoplasm. Functionally, component of the ribosome, a large ribonucleoprotein complex responsible for the synthesis of proteins in the cell. The small ribosomal subunit (SSU) binds messenger RNAs (mRNAs) and translates the encoded message by selecting cognate aminoacyl-transfer RNA (tRNA) molecules. The large subunit (LSU) contains the ribosomal catalytic site termed the peptidyl transferase center (PTC), which catalyzes the formation of peptide bonds, thereby polymerizing the amino acids delivered by tRNAs into a polypeptide chain. The nascent polypeptides leave the ribosome through a tunnel in the LSU and interact with protein factors that function in enzymatic processing, targeting, and the membrane insertion of nascent chains at the exit of the ribosomal tunnel. uS4 is involved in nucleolar processing of pre-18S ribosomal RNA and ribosome assembly. This Schizosaccharomyces pombe (strain 972 / ATCC 24843) (Fission yeast) protein is Small ribosomal subunit protein uS4A (rps901).